Here is a 473-residue protein sequence, read N- to C-terminus: Ribulose bisphosphate carboxylase large chain 2 (473 aa).

Residues N116 and T166 each contribute to the substrate site. The Proton acceptor role is filled by K168. K170 provides a ligand contact to substrate. Residues K194, D196, and E197 each contribute to the Mg(2+) site. K194 carries the N6-carboxylysine modification. Catalysis depends on H287, which acts as the Proton acceptor. 3 residues coordinate substrate: R288, H320, and S372.

The protein belongs to the RuBisCO large chain family. Type I subfamily. As to quaternary structure, heterohexadecamer of 8 large chains and 8 small chains. Mg(2+) serves as cofactor.

The enzyme catalyses 2 (2R)-3-phosphoglycerate + 2 H(+) = D-ribulose 1,5-bisphosphate + CO2 + H2O. It carries out the reaction D-ribulose 1,5-bisphosphate + O2 = 2-phosphoglycolate + (2R)-3-phosphoglycerate + 2 H(+). RuBisCO catalyzes two reactions: the carboxylation of D-ribulose 1,5-bisphosphate, the primary event in carbon dioxide fixation, as well as the oxidative fragmentation of the pentose substrate. Both reactions occur simultaneously and in competition at the same active site. The protein is Ribulose bisphosphate carboxylase large chain 2 of Acidithiobacillus ferrooxidans (Thiobacillus ferrooxidans).